Here is a 37-residue protein sequence, read N- to C-terminus: MIEPLLCGIVLGLIPITLAGLFMAAYLQYRRGNQLGA.

Residues 5–25 (LLCGIVLGLIPITLAGLFMAA) form a helical membrane-spanning segment.

This sequence belongs to the PetG family. In terms of assembly, the 4 large subunits of the cytochrome b6-f complex are cytochrome b6, subunit IV (17 kDa polypeptide, PetD), cytochrome f and the Rieske protein, while the 4 small subunits are PetG, PetL, PetM and PetN. The complex functions as a dimer.

It localises to the cellular thylakoid membrane. Its function is as follows. Component of the cytochrome b6-f complex, which mediates electron transfer between photosystem II (PSII) and photosystem I (PSI), cyclic electron flow around PSI, and state transitions. PetG is required for either the stability or assembly of the cytochrome b6-f complex. The chain is Cytochrome b6-f complex subunit 5 from Synechococcus elongatus (strain ATCC 33912 / PCC 7942 / FACHB-805) (Anacystis nidulans R2).